The primary structure comprises 234 residues: FAS1 domain-containing protein AFUA_8G05360 (234 aa).

The first 21 residues, 1–21 (MRRTLFVLFVVAFCFIGSVIA), serve as a signal peptide directing secretion. The region spanning 83 to 231 (KPVVSDVLPK…GELWILNSVL (149 aa)) is the FAS1 domain.

Its subcellular location is the vacuole. The protein is FAS1 domain-containing protein AFUA_8G05360 of Aspergillus fumigatus (strain ATCC MYA-4609 / CBS 101355 / FGSC A1100 / Af293) (Neosartorya fumigata).